Consider the following 197-residue polypeptide: Segregation and condensation protein B (197 aa).

It belongs to the ScpB family. As to quaternary structure, homodimer. Homodimerization may be required to stabilize the binding of ScpA to the Smc head domains. Component of a cohesin-like complex composed of ScpA, ScpB and the Smc homodimer, in which ScpA and ScpB bind to the head domain of Smc. The presence of the three proteins is required for the association of the complex with DNA.

The protein resides in the cytoplasm. Participates in chromosomal partition during cell division. May act via the formation of a condensin-like complex containing Smc and ScpA that pull DNA away from mid-cell into both cell halves. This chain is Segregation and condensation protein B, found in Halalkalibacterium halodurans (strain ATCC BAA-125 / DSM 18197 / FERM 7344 / JCM 9153 / C-125) (Bacillus halodurans).